The following is a 618-amino-acid chain: DNA mismatch repair protein MutL (618 aa).

The segment covering 367–381 (EPTAAREPATPRYSG) has biased composition (low complexity). Positions 367-402 (EPTAAREPATPRYSGGASGGNGGRQSAGGWPHAQPG) are disordered. A compositionally biased stretch (gly residues) spans 382 to 392 (GASGGNGGRQS).

This sequence belongs to the DNA mismatch repair MutL/HexB family.

Functionally, this protein is involved in the repair of mismatches in DNA. It is required for dam-dependent methyl-directed DNA mismatch repair. May act as a 'molecular matchmaker', a protein that promotes the formation of a stable complex between two or more DNA-binding proteins in an ATP-dependent manner without itself being part of a final effector complex. The chain is DNA mismatch repair protein MutL from Salmonella heidelberg (strain SL476).